Consider the following 176-residue polypeptide: Large ribosomal subunit protein uL15 (176 aa).

Residues 1-13 are compositionally biased toward basic and acidic residues; it reads MKLNDLRDNEGAR. Disordered regions lie at residues 1–48 and 151–176; these read MKLN…AIKG and IPAA…AKAE. Residues 21-35 are compositionally biased toward gly residues; sequence RGIGSGKGKTGGRGQ. Over residues 156–176 the composition is skewed to basic and acidic residues; it reads PEHEKKAARSEANKKAKAKAE.

Belongs to the universal ribosomal protein uL15 family. Part of the 50S ribosomal subunit.

In terms of biological role, binds to the 23S rRNA. This Erythrobacter litoralis (strain HTCC2594) protein is Large ribosomal subunit protein uL15.